The chain runs to 90 residues: RNA silencing suppressor (90 aa).

The tract at residues 15 to 18 is basic; sequence KRRR.

Belongs to the carlaviruses nucleic acid-binding protein family.

Functionally, suppressor of viral-induced RNA silencing. The potential mechanism of action is based on sequestering siRNAs. This is RNA silencing suppressor (ORF5) from Grapevine virus A (isolate Is 151) (GVA).